We begin with the raw amino-acid sequence, 1437 residues long: IQ domain-containing protein N (1437 aa).

In terms of domain architecture, IQ 1 spans 84-112 (SRAATVIQASWKGYRLRQKLISQMTAAKA). Disordered regions lie at residues 332–353 (TSPTSPVIRLPAPVGPNSSLSN), 416–440 (SQAQTYTVSTSSKTSPSSPTVKPSP), and 848–878 (STGSRAKPDDRSVAQPQLHSHAPNKTMQNPR). The segment covering 422-440 (TVSTSSKTSPSSPTVKPSP) has biased composition (low complexity). Over residues 861 to 878 (AQPQLHSHAPNKTMQNPR) the composition is skewed to polar residues. IQ domains follow at residues 1190 to 1216 (QAVVTIQACARGYLVRRTVKVWHQWAT), 1217 to 1239 (IIQATWRGYRVRRNLERLFRATT), 1240 to 1258 (IIQAAWRGYCIRRARARQV), 1361 to 1389 (QHRACTIIQAAWKGYRTRRQLSQKQSAAK), and 1390 to 1413 (MVQAVWRGHYTRSCLTTDALLGTG).

In terms of assembly, interacts with calmodulin. Expressed in testis, in elongating spermatids (at protein level).

In terms of biological role, essential for spermiogenesis and fertilization. May be required for manchette assembly in elongating spermatids. The polypeptide is IQ domain-containing protein N (Iqcn) (Mus musculus (Mouse)).